The primary structure comprises 436 residues: 3-ketoacyl-CoA thiolase (436 aa).

Cys-99 serves as the catalytic Acyl-thioester intermediate. Residues His-392 and Cys-422 each act as proton acceptor in the active site.

It belongs to the thiolase-like superfamily. Thiolase family. In terms of assembly, heterotetramer of two alpha chains (FadJ) and two beta chains (FadI).

It is found in the cytoplasm. The enzyme catalyses an acyl-CoA + acetyl-CoA = a 3-oxoacyl-CoA + CoA. The protein operates within lipid metabolism; fatty acid beta-oxidation. In terms of biological role, catalyzes the final step of fatty acid oxidation in which acetyl-CoA is released and the CoA ester of a fatty acid two carbons shorter is formed. The sequence is that of 3-ketoacyl-CoA thiolase from Photobacterium profundum (strain SS9).